Consider the following 479-residue polypeptide: uncharacterized protein (479 aa).

ATP-binding positions include 150-158, Asp-360, Arg-375, and Lys-462; that span reads TSGSTGKPK.

It belongs to the ATP-dependent AMP-binding enzyme family.

Its function is as follows. May be involved in fatty acid metabolism. This is an uncharacterized protein from Bacillus subtilis (strain 168).